A 135-amino-acid polypeptide reads, in one-letter code: Putative pre-16S rRNA nuclease (135 aa).

Belongs to the YqgF nuclease family.

It localises to the cytoplasm. Functionally, could be a nuclease involved in processing of the 5'-end of pre-16S rRNA. This is Putative pre-16S rRNA nuclease from Clostridium acetobutylicum (strain ATCC 824 / DSM 792 / JCM 1419 / IAM 19013 / LMG 5710 / NBRC 13948 / NRRL B-527 / VKM B-1787 / 2291 / W).